The following is a 300-amino-acid chain: MVNNSQHPYIKDGWFREINDKSFPGQAFTMTVDSILYEARSEFQDILIFRNKVYGTVLVLDGIVQCTEFDEFAYQEMITHIAMFAHSNPKRVLIIGGGDGGVLREVAKHSCVEDITMVEIDSSVIELSRKFLPTLSNGAFDDERLDLKLCDGFKFLQDIGASDVHKKFDVIITDSSDPEGPAEAFFQERYFELLKDALNPNGVVIMQSSENFWLNLKYLHDLKNTAKKVFPNTEYCYTMVPTYTSGQLGLIVCSNNANIPLNIPQRKISEQEQGKLKYYNPQIHSSAFVLPTWADKVINE.

A Phosphoserine modification is found at Ser-5. The region spanning 12 to 255 (DGWFREINDK…GQLGLIVCSN (244 aa)) is the PABS domain. Residues Gln-44, Asp-99, Glu-119, and 151-152 (DG) each bind S-adenosyl 3-(methylsulfanyl)propylamine. The Proton acceptor role is filled by Asp-174. Asp-177 contributes to the spermidine binding site.

This sequence belongs to the spermidine/spermine synthase family.

The catalysed reaction is S-adenosyl 3-(methylsulfanyl)propylamine + spermidine = spermine + S-methyl-5'-thioadenosine + H(+). It functions in the pathway amine and polyamine biosynthesis; spermine biosynthesis; spermine from spermidine: step 1/1. The polypeptide is Spermine synthase SPE4 (SPE4) (Saccharomyces cerevisiae (strain ATCC 204508 / S288c) (Baker's yeast)).